Consider the following 155-residue polypeptide: D-aminoacyl-tRNA deacylase (155 aa).

A Gly-cisPro motif, important for rejection of L-amino acids motif is present at residues 137 to 138; sequence GP.

This sequence belongs to the DTD family. Homodimer.

The protein resides in the cytoplasm. It catalyses the reaction glycyl-tRNA(Ala) + H2O = tRNA(Ala) + glycine + H(+). The catalysed reaction is a D-aminoacyl-tRNA + H2O = a tRNA + a D-alpha-amino acid + H(+). In terms of biological role, an aminoacyl-tRNA editing enzyme that deacylates mischarged D-aminoacyl-tRNAs. Also deacylates mischarged glycyl-tRNA(Ala), protecting cells against glycine mischarging by AlaRS. Acts via tRNA-based rather than protein-based catalysis; rejects L-amino acids rather than detecting D-amino acids in the active site. By recycling D-aminoacyl-tRNA to D-amino acids and free tRNA molecules, this enzyme counteracts the toxicity associated with the formation of D-aminoacyl-tRNA entities in vivo and helps enforce protein L-homochirality. The sequence is that of D-aminoacyl-tRNA deacylase from Geotalea uraniireducens (strain Rf4) (Geobacter uraniireducens).